We begin with the raw amino-acid sequence, 475 residues long: Ataxin-10 (475 aa).

Arginine 10 is subject to Omega-N-methylarginine. 2 positions are modified to phosphoserine: serine 12 and serine 77. At threonine 82 the chain carries Phosphothreonine. The residue at position 430 (serine 430) is a Phosphoserine.

The protein belongs to the ataxin-10 family. In terms of assembly, homooligomer. Interacts with GNB2. Interacts with IQCB1. Interacts with OGT. In terms of processing, polyubiquitinated. Phosphorylation at Ser-12 by AURKB promotes the association of ATXN10 with PLK1. Phosphorylation at Ser-77 and Thr-82 by PLK1 may play a role in the regulation of cytokinesis and may stimulate the proteasome-mediated degradation of ATXN10.

It is found in the cytoplasm. It localises to the perinuclear region. Its subcellular location is the midbody. The protein resides in the cytoskeleton. The protein localises to the cilium basal body. It is found in the microtubule organizing center. It localises to the centrosome. Its subcellular location is the centriole. May play a role in the regulation of cytokinesis. May play a role in signaling by stimulating protein glycosylation. Induces neuritogenesis by activating the Ras-MAP kinase pathway and is necessary for the survival of cerebellar neurons. Does not appear to play a major role in ciliogenesis. This Macaca fascicularis (Crab-eating macaque) protein is Ataxin-10 (ATXN10).